The following is a 390-amino-acid chain: COP9/Signalosome and eIF3 complex-shared subunit 1 (390 aa).

Positions Gln-188–His-351 constitute a PCI domain.

It belongs to the eIF-3 subunit M family. Component of the eukaryotic translation initiation factor 3 (eIF-3) complex. Within the eIF-3 complex, interacts directly with eif-3.F. Component of the CSN complex, composed of csn-1, csn-2, csn-3, csn-4, csn-5, csn-6 and csn-7. Within the CSN complex, interacts directly with csn-1 and csn-4.

The protein resides in the cytoplasm. Component of the eukaryotic translation initiation factor 3 (eIF-3) complex, which is involved in protein synthesis of a specialized repertoire of mRNAs and, together with other initiation factors, stimulates binding of mRNA and methionyl-tRNAi to the 40S ribosome. The eIF-3 complex specifically targets and initiates translation of a subset of mRNAs involved in cell proliferation (Potential). Component of the COP9 signalosome complex (CSN), a complex involved in various cellular and developmental processes. The CSN complex is an essential regulator of the ubiquitin (Ubl) conjugation pathway by mediating the deneddylation of the cullin subunits of the SCF-type E3 ligase complexes, leading to decrease the Ubl ligase activity of SCF. The CSN complex plays an essential role in embryogenesis and oogenesis and is required to regulate microtubule stability in the early embryo. Mediates mei-1 targeting for degradation at the meiosis to mitosis transition via deneddylation of cul-3. In Caenorhabditis elegans, this protein is COP9/Signalosome and eIF3 complex-shared subunit 1.